Consider the following 296-residue polypeptide: MPEVDNVIKEKLKLLVEMDPKKMIIYPLIVFGIAIIIIIANYVMTGSFVKEGIELRGGSVITLQGVNVSPDEIAKSIKEKTGIDVTVEKFSGVGGSGVRVYVSAGDDVNLVREALKEMFPDVEPQTVVIGPTFGEIVREQGIKAIVYAFIGMAIVVFLFFRVPVPSMTVVFSAFSDMIIAIALMNIFGIELSQATIAALLMLIGYSVDSNILLTTRLLRRKEFTVEEAYYSSLKTGFTMSTTTLGALASLWIFSTAQVIDDIASVLIFGLLADFMNTWILNAGVLRLYIAKREGKE.

Helical transmembrane passes span 23 to 43 (MIIYPLIVFGIAIIIIIANYV), 144 to 164 (AIVYAFIGMAIVVFLFFRVPV), 169 to 189 (VVFSAFSDMIIAIALMNIFGI), 194 to 214 (ATIAALLMLIGYSVDSNILLT), 236 to 256 (GFTMSTTTLGALASLWIFSTA), and 265 to 285 (VLIFGLLADFMNTWILNAGVL).

Belongs to the SecD/SecF family. SecF subfamily. Part of the protein translocation apparatus. Forms a complex with SecD.

The protein localises to the cell membrane. Involved in protein export. The chain is Protein-export membrane protein SecF from Pyrococcus furiosus (strain ATCC 43587 / DSM 3638 / JCM 8422 / Vc1).